The following is a 508-amino-acid chain: ATP synthase subunit alpha, chloroplastic (508 aa).

Residue 170-177 (GDRQTGKT) participates in ATP binding.

Belongs to the ATPase alpha/beta chains family. In terms of assembly, F-type ATPases have 2 components, F(1) - the catalytic core - and F(0) - the membrane proton channel. F(1) has five subunits: alpha(3), beta(3), gamma(1), delta(1), epsilon(1). F(0) has four main subunits: a(1), b(1), b'(1) and c(10-14). The alpha and beta chains form an alternating ring which encloses part of the gamma chain. F(1) is attached to F(0) by a central stalk formed by the gamma and epsilon chains, while a peripheral stalk is formed by the delta, b and b' chains.

The protein localises to the plastid. It is found in the chloroplast thylakoid membrane. The catalysed reaction is ATP + H2O + 4 H(+)(in) = ADP + phosphate + 5 H(+)(out). In terms of biological role, f(1)F(0) ATP synthase produces ATP from ADP in the presence of a proton or sodium gradient. F-type ATPases consist of two structural domains, F(1) containing the extramembraneous catalytic core and F(0) containing the membrane proton channel, linked together by a central stalk and a peripheral stalk. During catalysis, ATP synthesis in the catalytic domain of F(1) is coupled via a rotary mechanism of the central stalk subunits to proton translocation. The alpha chain is a regulatory subunit. The polypeptide is ATP synthase subunit alpha, chloroplastic (Chlamydomonas reinhardtii (Chlamydomonas smithii)).